The primary structure comprises 316 residues: Pantothenate kinase (316 aa).

ATP is bound at residue 95-102 (GSVAVGKS).

The protein belongs to the prokaryotic pantothenate kinase family.

It localises to the cytoplasm. It carries out the reaction (R)-pantothenate + ATP = (R)-4'-phosphopantothenate + ADP + H(+). It functions in the pathway cofactor biosynthesis; coenzyme A biosynthesis; CoA from (R)-pantothenate: step 1/5. The chain is Pantothenate kinase from Photorhabdus laumondii subsp. laumondii (strain DSM 15139 / CIP 105565 / TT01) (Photorhabdus luminescens subsp. laumondii).